The chain runs to 356 residues: Glutamine synthetase nodule isozyme (356 aa).

Residues 19–99 form the GS beta-grasp domain; it reads IIAEYIWIGG…VMCDAYTPAG (81 aa). The disordered stretch occupies residues 41-66; it reads PGPVSDPSKLPKWNYDGSSTGQAPGE. The region spanning 106–356 is the GS catalytic domain; it reads KRHNAAKIFS…IADTTILWKP (251 aa).

Belongs to the glutamine synthetase family. In terms of assembly, homooctamer.

The protein localises to the cytoplasm. It catalyses the reaction L-glutamate + NH4(+) + ATP = L-glutamine + ADP + phosphate + H(+). The chain is Glutamine synthetase nodule isozyme from Vigna aconitifolia (Moth bean).